Consider the following 295-residue polypeptide: 4-hydroxy-3-methylbut-2-enyl diphosphate reductase (295 aa).

Position 12 (C12) interacts with [4Fe-4S] cluster. (2E)-4-hydroxy-3-methylbut-2-enyl diphosphate is bound by residues H43 and H81. Residues H43 and H81 each contribute to the dimethylallyl diphosphate site. Isopentenyl diphosphate contacts are provided by H43 and H81. C103 contributes to the [4Fe-4S] cluster binding site. (2E)-4-hydroxy-3-methylbut-2-enyl diphosphate is bound at residue H131. H131 provides a ligand contact to dimethylallyl diphosphate. H131 is an isopentenyl diphosphate binding site. Catalysis depends on E133, which acts as the Proton donor. Position 171 (T171) interacts with (2E)-4-hydroxy-3-methylbut-2-enyl diphosphate. Position 199 (C199) interacts with [4Fe-4S] cluster. Residues S227, N229, and S272 each coordinate (2E)-4-hydroxy-3-methylbut-2-enyl diphosphate. S227, N229, and S272 together coordinate dimethylallyl diphosphate. 3 residues coordinate isopentenyl diphosphate: S227, N229, and S272.

This sequence belongs to the IspH family. [4Fe-4S] cluster is required as a cofactor.

The catalysed reaction is isopentenyl diphosphate + 2 oxidized [2Fe-2S]-[ferredoxin] + H2O = (2E)-4-hydroxy-3-methylbut-2-enyl diphosphate + 2 reduced [2Fe-2S]-[ferredoxin] + 2 H(+). It carries out the reaction dimethylallyl diphosphate + 2 oxidized [2Fe-2S]-[ferredoxin] + H2O = (2E)-4-hydroxy-3-methylbut-2-enyl diphosphate + 2 reduced [2Fe-2S]-[ferredoxin] + 2 H(+). It functions in the pathway isoprenoid biosynthesis; dimethylallyl diphosphate biosynthesis; dimethylallyl diphosphate from (2E)-4-hydroxy-3-methylbutenyl diphosphate: step 1/1. Its pathway is isoprenoid biosynthesis; isopentenyl diphosphate biosynthesis via DXP pathway; isopentenyl diphosphate from 1-deoxy-D-xylulose 5-phosphate: step 6/6. Catalyzes the conversion of 1-hydroxy-2-methyl-2-(E)-butenyl 4-diphosphate (HMBPP) into a mixture of isopentenyl diphosphate (IPP) and dimethylallyl diphosphate (DMAPP). Acts in the terminal step of the DOXP/MEP pathway for isoprenoid precursor biosynthesis. This chain is 4-hydroxy-3-methylbut-2-enyl diphosphate reductase, found in Symbiobacterium thermophilum (strain DSM 24528 / JCM 14929 / IAM 14863 / T).